Consider the following 215-residue polypeptide: Redox-sensing transcriptional repressor Rex (215 aa).

The segment at residues 18–57 is a DNA-binding region (H-T-H motif); it reads LYYRFLKNLHASGKQRVSSAELSDAVKVDSATIRRDFSYF. 92–97 contacts NAD(+); the sequence is GVGNLG.

It belongs to the transcriptional regulatory Rex family. Homodimer.

It localises to the cytoplasm. Functionally, modulates transcription in response to changes in cellular NADH/NAD(+) redox state. The chain is Redox-sensing transcriptional repressor Rex from Bacillus licheniformis (strain ATCC 14580 / DSM 13 / JCM 2505 / CCUG 7422 / NBRC 12200 / NCIMB 9375 / NCTC 10341 / NRRL NRS-1264 / Gibson 46).